Consider the following 205-residue polypeptide: Cytochrome c biogenesis ATP-binding export protein CcmA 2 (205 aa).

The ABC transporter domain maps to 2 to 205 (LEARDLYCER…LALTGGGAGL (204 aa)). Residue 34 to 41 (GGNGAGKT) coordinates ATP.

This sequence belongs to the ABC transporter superfamily. CcmA exporter (TC 3.A.1.107) family. In terms of assembly, the complex is composed of two ATP-binding proteins (CcmA) and two transmembrane proteins (CcmB).

It localises to the cell inner membrane. It carries out the reaction heme b(in) + ATP + H2O = heme b(out) + ADP + phosphate + H(+). In terms of biological role, part of the ABC transporter complex CcmAB involved in the biogenesis of c-type cytochromes; once thought to export heme, this seems not to be the case, but its exact role is uncertain. Responsible for energy coupling to the transport system. The polypeptide is Cytochrome c biogenesis ATP-binding export protein CcmA 2 (Salmonella typhimurium (strain LT2 / SGSC1412 / ATCC 700720)).